A 474-amino-acid polypeptide reads, in one-letter code: Vacuolar basic amino acid transporter 2 (474 aa).

Over methionine 1–asparagine 33 the chain is Cytoplasmic. The helical transmembrane segment at cysteine 34 to asparagine 54 threads the bilayer. The Vacuolar segment spans residues isoleucine 55 to arginine 62. The chain crosses the membrane as a helical span at residues alanine 63–proline 85. At serine 86–asparagine 97 the chain is on the cytoplasmic side. The chain crosses the membrane as a helical span at residues leucine 98 to isoleucine 118. The Vacuolar portion of the chain corresponds to glycine 119–arginine 121. A helical membrane pass occupies residues tryptophan 122 to valine 142. Residues proline 143–aspartate 167 are Cytoplasmic-facing. Residues valine 168–glycine 188 traverse the membrane as a helical segment. Residues cysteine 189–tryptophan 196 are Vacuolar-facing. The chain crosses the membrane as a helical span at residues threonine 197–leucine 217. The Cytoplasmic segment spans residues histidine 218–serine 238. The helical transmembrane segment at valine 239–leucine 259 threads the bilayer. At proline 260 to lysine 273 the chain is on the vacuolar side. Residues alanine 274–phenylalanine 294 traverse the membrane as a helical segment. Residues serine 295–arginine 303 are Cytoplasmic-facing. Residues leucine 304–glutamate 324 traverse the membrane as a helical segment. The Vacuolar portion of the chain corresponds to lysine 325–leucine 331. A helical membrane pass occupies residues isoleucine 332–phenylalanine 352. Residues threonine 353–serine 375 are Cytoplasmic-facing. The chain crosses the membrane as a helical span at residues isoleucine 376 to leucine 396. Residues leucine 397 to histidine 447 lie on the Vacuolar side of the membrane. Asparagine 420 carries N-linked (GlcNAc...) asparagine glycosylation. A helical membrane pass occupies residues leucine 448–alanine 468. Residues lysine 469 to arginine 474 are Cytoplasmic-facing.

The protein belongs to the major facilitator superfamily.

Its subcellular location is the vacuole membrane. Functionally, transporter required for vacuolar uptake of histidine, arginine and lysine and to a lesser extent tyrosine. This is Vacuolar basic amino acid transporter 2 (VBA2) from Saccharomyces cerevisiae (strain ATCC 204508 / S288c) (Baker's yeast).